A 360-amino-acid chain; its full sequence is MSKCGRKKYMKTNLRQMTMETIDSQQDGSLPDSVAESESAHMQTQTGQNSIPTLAQVSVAGSSTGRGSPAVTLVQLPSGQTVHVQGVIQTPQPSVIQSPQIQTVQVATIAETDESAESEGVIDSHKRREILSRRPSYRKILNELSSDVPGVPKIEEEKSEEEGTPPNIAAMAVPTSIYQTSTGQYIAIAQGGTIQISNPGSDGVQGLQALTMTNSGAPPPGATIVQYAAQSADGTQQFFVPGSQVVVQDEETELAPSHMAAATGDMPTYQIRAPTTALPQGVVMAASPGSLHSPQQLAEEATRKRELRLMKNREAAKECRRRKKEYVKCLESRVAVLEVQNKKLIEELETLKDICSPKTD.

2 stretches are compositionally biased toward polar residues: residues 19–28 and 40–52; these read METIDSQQDG and AHMQTQTGQNSIP. A disordered region spans residues 19–52; the sequence is METIDSQQDGSLPDSVAESESAHMQTQTGQNSIP. Residues 104-163 enclose the KID domain; that stretch reads VQVATIAETDESAESEGVIDSHKRREILSRRPSYRKILNELSSDVPGVPKIEEEKSEEEG. Phosphoserine is present on residues serine 118, serine 145, serine 287, serine 290, and serine 293. The region spanning 302–360 is the bZIP domain; it reads TRKRELRLMKNREAAKECRRRKKEYVKCLESRVAVLEVQNKKLIEELETLKDICSPKTD. Residues 303 to 328 are basic motif; sequence RKRELRLMKNREAAKECRRRKKEYVK. Residues 330–351 are leucine-zipper; the sequence is LESRVAVLEVQNKKLIEELETL.

The protein belongs to the bZIP family. Binds DNA as a dimer. Interacts with FHL5. Interacts with CDC34. May interact with TSSK4. Stimulated by phosphorylation. Phosphorylated on Ser-118 by TSSK4 in vitro.

It is found in the nucleus. In terms of biological role, transcriptional regulator that binds the cAMP response element (CRE), a sequence present in many viral and cellular promoters. Isoforms are either transcriptional activators or repressors. Isoform 1 and isoform 2 are transcriptional activators. Plays a role in spermatogenesis and is involved in spermatid maturation. The sequence is that of cAMP-responsive element modulator (CREM) from Bos taurus (Bovine).